A 304-amino-acid polypeptide reads, in one-letter code: Non-specific ribonucleoside hydrolase RihC (304 aa).

His233 is an active-site residue.

Belongs to the IUNH family. RihC subfamily.

Its function is as follows. Hydrolyzes both purine and pyrimidine ribonucleosides with a broad-substrate specificity. The chain is Non-specific ribonucleoside hydrolase RihC from Escherichia coli (strain SE11).